Consider the following 139-residue polypeptide: Large ribosomal subunit protein bL21 (139 aa).

The protein belongs to the bacterial ribosomal protein bL21 family. In terms of assembly, part of the 50S ribosomal subunit. Contacts protein L20.

In terms of biological role, this protein binds to 23S rRNA in the presence of protein L20. The protein is Large ribosomal subunit protein bL21 of Prochlorococcus marinus (strain NATL1A).